Reading from the N-terminus, the 376-residue chain is PqqA peptide cyclase (376 aa).

Residues V7 to A222 form the Radical SAM core domain. [4Fe-4S] cluster-binding residues include C21, C25, and C28.

This sequence belongs to the radical SAM superfamily. PqqE family. As to quaternary structure, interacts with PqqD. The interaction is necessary for activity of PqqE. [4Fe-4S] cluster serves as cofactor.

The enzyme catalyses [PQQ precursor protein] + S-adenosyl-L-methionine = E-Y cross-linked-[PQQ precursor protein] + 5'-deoxyadenosine + L-methionine + H(+). The protein operates within cofactor biosynthesis; pyrroloquinoline quinone biosynthesis. In terms of biological role, catalyzes the cross-linking of a glutamate residue and a tyrosine residue in the PqqA protein as part of the biosynthesis of pyrroloquinoline quinone (PQQ). This is PqqA peptide cyclase from Pseudomonas putida (strain ATCC 47054 / DSM 6125 / CFBP 8728 / NCIMB 11950 / KT2440).